Reading from the N-terminus, the 490-residue chain is Betaine aldehyde dehydrogenase (490 aa).

The K(+) site is built by Ile27 and Asp93. 150-152 (GAW) is an NAD(+) binding site. The active-site Charge relay system is the Lys162. 176 to 179 (KPSE) serves as a coordination point for NAD(+). Val180 provides a ligand contact to K(+). An NAD(+)-binding site is contributed by 230-233 (GTTT). Leu246 is a binding site for K(+). Glu252 acts as the Proton acceptor in catalysis. Residues Gly254, Cys286, and Glu387 each contribute to the NAD(+) site. The active-site Nucleophile is Cys286. The residue at position 286 (Cys286) is a Cysteine sulfenic acid (-SOH). 2 residues coordinate K(+): Lys457 and Gly460. Glu464 serves as the catalytic Charge relay system.

This sequence belongs to the aldehyde dehydrogenase family. In terms of assembly, dimer of dimers. Requires K(+) as cofactor.

It carries out the reaction betaine aldehyde + NAD(+) + H2O = glycine betaine + NADH + 2 H(+). It functions in the pathway amine and polyamine biosynthesis; betaine biosynthesis via choline pathway; betaine from betaine aldehyde: step 1/1. Involved in the biosynthesis of the osmoprotectant glycine betaine. Catalyzes the irreversible oxidation of betaine aldehyde to the corresponding acid. The protein is Betaine aldehyde dehydrogenase of Pseudomonas putida (strain W619).